Consider the following 1171-residue polypeptide: Pyruvate:ferredoxin oxidoreductase (1171 aa).

Residues threonine 29 and arginine 112 each contribute to the pyruvate site. CoA is bound by residues 424–428 (SDGTV), lysine 456, asparagine 556, and asparagine 598. 4Fe-4S ferredoxin-type domains follow at residues 677–706 (NIPQ…PYLA) and 733–764 (FRIQ…MVPL). [4Fe-4S] cluster is bound by residues cysteine 686, cysteine 689, cysteine 692, cysteine 696, cysteine 742, cysteine 745, cysteine 748, cysteine 752, cysteine 809, and cysteine 812. Residues glutamate 814, cysteine 837, 967 to 969 (DGW), and 995 to 1000 (TEVYSN) each bind thiamine diphosphate. Residue cysteine 837 participates in [4Fe-4S] cluster binding. 3 residues coordinate Mg(2+): aspartate 967, threonine 995, and valine 997. Pyruvate is bound at residue asparagine 1000. [4Fe-4S] cluster is bound at residue cysteine 1075.

It belongs to the pyruvate:ferredoxin/flavodoxin oxidoreductase family. In terms of assembly, homodimer. [4Fe-4S] cluster is required as a cofactor. Thiamine diphosphate serves as cofactor. It depends on Mg(2+) as a cofactor.

It carries out the reaction 2 oxidized [2Fe-2S]-[ferredoxin] + pyruvate + CoA = 2 reduced [2Fe-2S]-[ferredoxin] + acetyl-CoA + CO2 + H(+). Catalyzes the oxidative decarboxylation of pyruvate to acetyl-CoA and carbon dioxide. The two electrons that are generated as a result of pyruvate decarboxylation are used in the reduction of low potential ferredoxins, which provide reducing equivalents for central metabolism. Also catalyzes the reverse reaction, i.e. the synthesis of pyruvate from acetyl-CoA and carbon dioxide. Appears to function physiologically in both directions. The oxidation of pyruvate by PFOR is required to connect glycolysis and the Wood-Ljungdahl pathway of reductive acetogenesis. The conversion of acetyl-CoA to pyruvate links the Wood-Ljungdahl pathway of autotrophic CO2 fixation to the reductive tricarboxylic acid cycle. Can use methyl viologen as electron carrier in vitro. The sequence is that of Pyruvate:ferredoxin oxidoreductase from Moorella thermoacetica (strain ATCC 39073 / JCM 9320).